The following is a 259-amino-acid chain: Thiazole synthase (259 aa).

Residue Lys98 is the Schiff-base intermediate with DXP of the active site. 1-deoxy-D-xylulose 5-phosphate is bound by residues Gly159, 185-186 (AG), and 207-208 (NS).

It belongs to the ThiG family. Homotetramer. Forms heterodimers with either ThiH or ThiS.

It is found in the cytoplasm. The enzyme catalyses [ThiS sulfur-carrier protein]-C-terminal-Gly-aminoethanethioate + 2-iminoacetate + 1-deoxy-D-xylulose 5-phosphate = [ThiS sulfur-carrier protein]-C-terminal Gly-Gly + 2-[(2R,5Z)-2-carboxy-4-methylthiazol-5(2H)-ylidene]ethyl phosphate + 2 H2O + H(+). It functions in the pathway cofactor biosynthesis; thiamine diphosphate biosynthesis. Its function is as follows. Catalyzes the rearrangement of 1-deoxy-D-xylulose 5-phosphate (DXP) to produce the thiazole phosphate moiety of thiamine. Sulfur is provided by the thiocarboxylate moiety of the carrier protein ThiS. In vitro, sulfur can be provided by H(2)S. The chain is Thiazole synthase from Chlorobium phaeobacteroides (strain DSM 266 / SMG 266 / 2430).